We begin with the raw amino-acid sequence, 401 residues long: 4-hydroxy-3-methylbut-2-enyl diphosphate reductase (401 aa).

[4Fe-4S] cluster is bound at residue Cys-66. His-96 contributes to the (2E)-4-hydroxy-3-methylbut-2-enyl diphosphate binding site. Position 96 (His-96) interacts with dimethylallyl diphosphate. Position 96 (His-96) interacts with isopentenyl diphosphate. Cys-157 provides a ligand contact to [4Fe-4S] cluster. His-185 serves as a coordination point for (2E)-4-hydroxy-3-methylbut-2-enyl diphosphate. His-185 contributes to the dimethylallyl diphosphate binding site. His-185 contributes to the isopentenyl diphosphate binding site. The Proton donor role is filled by Glu-187. Residue Thr-250 coordinates (2E)-4-hydroxy-3-methylbut-2-enyl diphosphate. Residue Cys-288 coordinates [4Fe-4S] cluster. (2E)-4-hydroxy-3-methylbut-2-enyl diphosphate contacts are provided by Ser-317, Ser-318, Asn-319, and Ser-379. Residues Ser-317, Ser-318, Asn-319, and Ser-379 each coordinate dimethylallyl diphosphate. Isopentenyl diphosphate is bound by residues Ser-317, Ser-318, Asn-319, and Ser-379.

The protein belongs to the IspH family. It depends on [4Fe-4S] cluster as a cofactor.

The catalysed reaction is isopentenyl diphosphate + 2 oxidized [2Fe-2S]-[ferredoxin] + H2O = (2E)-4-hydroxy-3-methylbut-2-enyl diphosphate + 2 reduced [2Fe-2S]-[ferredoxin] + 2 H(+). It carries out the reaction dimethylallyl diphosphate + 2 oxidized [2Fe-2S]-[ferredoxin] + H2O = (2E)-4-hydroxy-3-methylbut-2-enyl diphosphate + 2 reduced [2Fe-2S]-[ferredoxin] + 2 H(+). Its pathway is isoprenoid biosynthesis; dimethylallyl diphosphate biosynthesis; dimethylallyl diphosphate from (2E)-4-hydroxy-3-methylbutenyl diphosphate: step 1/1. The protein operates within isoprenoid biosynthesis; isopentenyl diphosphate biosynthesis via DXP pathway; isopentenyl diphosphate from 1-deoxy-D-xylulose 5-phosphate: step 6/6. Functionally, catalyzes the conversion of 1-hydroxy-2-methyl-2-(E)-butenyl 4-diphosphate (HMBPP) into a mixture of isopentenyl diphosphate (IPP) and dimethylallyl diphosphate (DMAPP). Acts in the terminal step of the DOXP/MEP pathway for isoprenoid precursor biosynthesis. The chain is 4-hydroxy-3-methylbut-2-enyl diphosphate reductase from Trichodesmium erythraeum (strain IMS101).